The sequence spans 263 residues: Urease accessory protein UreH (263 aa).

This sequence belongs to the UreD family. As to quaternary structure, ureH, UreF and UreG form a complex that acts as a GTP-hydrolysis-dependent molecular chaperone, activating the urease apoprotein by helping to assemble the nickel containing metallocenter of UreC. The UreE protein probably delivers the nickel.

The protein localises to the cytoplasm. Its function is as follows. Required for maturation of urease via the functional incorporation of the urease nickel metallocenter. This is Urease accessory protein UreH from Helicobacter acinonychis (strain Sheeba).